Consider the following 245-residue polypeptide: 14-3-3 protein zeta/delta (245 aa).

M1 carries the N-acetylmethionine modification. K3 bears the N6-acetyllysine mark. S58 carries the phosphoserine; by PKA modification. Position 68 is an N6-acetyllysine (K68). S184, S207, and S210 each carry phosphoserine. Position 232 is a phosphothreonine; by CK1 (T232).

The protein belongs to the 14-3-3 family. In terms of assembly, interacts with CDK16 and BSPRY. Interacts with WEE1 (C-terminal). Interacts with SAMSN1. Interacts with MLF1 (phosphorylated form); the interaction retains it in the cytoplasm. Interacts with Thr-phosphorylated ITGB2. Interacts with BCL2L11. Homodimer. Heterodimerizes with YWHAE. Homo- and heterodimerization is inhibited by phosphorylation on Ser-58. Interacts with FOXO4, NOXA1, SSH1 and ARHGEF2. Interacts with Pseudomonas aeruginosa exoS (unphosphorylated form). Interacts with BAX; the interaction occurs in the cytoplasm. Under stress conditions, MAPK8-mediated phosphorylation releases BAX to mitochondria. Interacts with phosphorylated RAF1; the interaction is inhibited when YWHAZ is phosphorylated on Thr-232. Interacts with TP53; the interaction enhances p53 transcriptional activity. The Ser-58 phosphorylated form inhibits this interaction and p53 transcriptional activity. Interacts with ABL1 (phosphorylated form); the interaction retains ABL1 in the cytoplasm. Interacts with PKA-phosphorylated AANAT; the interaction modulates AANAT enzymatic activity by increasing affinity for arylalkylamines and acetyl-CoA and protecting the enzyme from dephosphorylation and proteasomal degradation. It may also prevent thiol-dependent inactivation. Interacts with AKT1; the interaction phosphorylates YWHAZ and modulates dimerization. Interacts with GAB2 and TLK2. Interacts with the 'Thr-369' phosphorylated form of DAPK2. Interacts with PI4KB, TBC1D22A and TBC1D22B. Interacts with ZFP36L1 (via phosphorylated form); this interaction occurs in a p38 MAPK- and AKT-signaling pathways. Interacts with SLITRK1. Interacts with AK5, LDB1, MADD, MARK3, PDE1A and SMARCB1. Interacts with YWHAZ. Interacts with MEFV. Interacts with ADAM22 (via C-terminus). The delta, brain-specific form differs from the zeta form in being phosphorylated. Phosphorylation on Ser-184 by MAPK8; promotes dissociation of BAX and translocation of BAX to mitochondria. Phosphorylation on Thr-232; inhibits binding of RAF1. Phosphorylated on Ser-58 by PKA and protein kinase C delta type catalytic subunit in a sphingosine-dependent fashion. Phosphorylation on Ser-58 by PKA; disrupts homodimerization and heterodimerization with YHAE and TP53. Highly expressed in brain (at protein level).

The protein localises to the cytoplasm. It localises to the melanosome. In terms of biological role, adapter protein implicated in the regulation of a large spectrum of both general and specialized signaling pathways. Binds to a large number of partners, usually by recognition of a phosphoserine or phosphothreonine motif. Binding generally results in the modulation of the activity of the binding partner. Promotes cytosolic retention and inactivation of TFEB transcription factor by binding to phosphorylated TFEB. Induces ARHGEF7 activity on RAC1 as well as lamellipodia and membrane ruffle formation. In neurons, regulates spine maturation through the modulation of ARHGEF7 activity. In Ovis aries (Sheep), this protein is 14-3-3 protein zeta/delta (YWHAZ).